A 230-amino-acid polypeptide reads, in one-letter code: Orotidine 5'-phosphate decarboxylase (230 aa).

Residues Asp-11, Lys-34, 61-70, Thr-117, Arg-179, Gln-188, Gly-208, and Arg-209 each bind substrate; that span reads DLKLHDIPNT. Lys-63 functions as the Proton donor in the catalytic mechanism.

The protein belongs to the OMP decarboxylase family. Type 1 subfamily. Homodimer.

The catalysed reaction is orotidine 5'-phosphate + H(+) = UMP + CO2. It functions in the pathway pyrimidine metabolism; UMP biosynthesis via de novo pathway; UMP from orotate: step 2/2. Its function is as follows. Catalyzes the decarboxylation of orotidine 5'-monophosphate (OMP) to uridine 5'-monophosphate (UMP). In Streptococcus pyogenes serotype M28 (strain MGAS6180), this protein is Orotidine 5'-phosphate decarboxylase.